A 110-amino-acid chain; its full sequence is Acylphosphatase (110 aa).

In terms of domain architecture, Acylphosphatase-like spans 21-108 (TRRYLVTGRV…TNLKSFRIEG (88 aa)). Residues arginine 36 and asparagine 54 contribute to the active site.

Belongs to the acylphosphatase family.

It carries out the reaction an acyl phosphate + H2O = a carboxylate + phosphate + H(+). The protein is Acylphosphatase (acyP) of Koribacter versatilis (strain Ellin345).